Consider the following 278-residue polypeptide: Sulfur carrier protein FdhD (278 aa).

Cysteine 121 acts as the Cysteine persulfide intermediate in catalysis. Mo-bis(molybdopterin guanine dinucleotide) is bound at residue 260-265 (FCKPGR).

Belongs to the FdhD family.

It localises to the cytoplasm. Its function is as follows. Required for formate dehydrogenase (FDH) activity. Acts as a sulfur carrier protein that transfers sulfur from IscS to the molybdenum cofactor prior to its insertion into FDH. The sequence is that of Sulfur carrier protein FdhD from Escherichia coli O127:H6 (strain E2348/69 / EPEC).